Reading from the N-terminus, the 249-residue chain is Type III pantothenate kinase (249 aa).

6–13 (DVGNTHTT) lines the ATP pocket. Residue 101–104 (GADR) participates in substrate binding. Asp-103 functions as the Proton acceptor in the catalytic mechanism. Asp-123 is a K(+) binding site. An ATP-binding site is contributed by Thr-126. Thr-177 contributes to the substrate binding site.

The protein belongs to the type III pantothenate kinase family. In terms of assembly, homodimer. The cofactor is NH4(+). It depends on K(+) as a cofactor.

It is found in the cytoplasm. The enzyme catalyses (R)-pantothenate + ATP = (R)-4'-phosphopantothenate + ADP + H(+). Its pathway is cofactor biosynthesis; coenzyme A biosynthesis; CoA from (R)-pantothenate: step 1/5. Functionally, catalyzes the phosphorylation of pantothenate (Pan), the first step in CoA biosynthesis. This chain is Type III pantothenate kinase, found in Thermosipho africanus (strain TCF52B).